Here is a 139-residue protein sequence, read N- to C-terminus: Large ribosomal subunit protein uL16 (139 aa).

The span at 1–11 (MLQPKRTKYRK) shows a compositional bias: basic residues. The tract at residues 1–30 (MLQPKRTKYRKPFLQSHDKRKAHKGNKVSF) is disordered.

The protein belongs to the universal ribosomal protein uL16 family. In terms of assembly, part of the 50S ribosomal subunit.

Binds 23S rRNA and is also seen to make contacts with the A and possibly P site tRNAs. The chain is Large ribosomal subunit protein uL16 from Mycoplasmopsis synoviae (strain 53) (Mycoplasma synoviae).